Here is a 471-residue protein sequence, read N- to C-terminus: NADH-quinone oxidoreductase subunit N 1 (471 aa).

Transmembrane regions (helical) follow at residues Ala-11–Trp-31, Thr-39–Ala-59, Ala-81–His-101, Thr-105–Gly-125, Leu-127–Trp-147, Leu-162–Ala-182, Ala-200–Val-220, Pro-234–Tyr-254, Leu-270–Gln-290, Met-296–Gly-316, Ala-324–Ala-344, Ala-365–Val-385, Gly-398–Leu-418, and Ala-444–Leu-464.

Belongs to the complex I subunit 2 family. NDH-1 is composed of 14 different subunits. Subunits NuoA, H, J, K, L, M, N constitute the membrane sector of the complex.

The protein localises to the cell membrane. It carries out the reaction a quinone + NADH + 5 H(+)(in) = a quinol + NAD(+) + 4 H(+)(out). In terms of biological role, NDH-1 shuttles electrons from NADH, via FMN and iron-sulfur (Fe-S) centers, to quinones in the respiratory chain. The immediate electron acceptor for the enzyme in this species is believed to be a menaquinone. Couples the redox reaction to proton translocation (for every two electrons transferred, four hydrogen ions are translocated across the cytoplasmic membrane), and thus conserves the redox energy in a proton gradient. This is NADH-quinone oxidoreductase subunit N 1 from Streptomyces griseus subsp. griseus (strain JCM 4626 / CBS 651.72 / NBRC 13350 / KCC S-0626 / ISP 5235).